A 758-amino-acid chain; its full sequence is 5-methyltetrahydropteroyltriglutamate--homocysteine methyltransferase (758 aa).

Residues 17-20 and K114 each bind 5-methyltetrahydropteroyltri-L-glutamate; that span reads RELK. L-homocysteine-binding positions include 429–431 and E482; that span reads IGS. Residues 429–431 and E482 each bind L-methionine; that span reads IGS. Residues 513–514 and W559 each bind 5-methyltetrahydropteroyltri-L-glutamate; that span reads RC. Position 597 (D597) interacts with L-homocysteine. Residue D597 coordinates L-methionine. Residue E603 coordinates 5-methyltetrahydropteroyltri-L-glutamate. Residues H639, C641, and E663 each contribute to the Zn(2+) site. H692 acts as the Proton donor in catalysis. C724 contributes to the Zn(2+) binding site.

It belongs to the vitamin-B12 independent methionine synthase family. Requires Zn(2+) as cofactor.

It catalyses the reaction 5-methyltetrahydropteroyltri-L-glutamate + L-homocysteine = tetrahydropteroyltri-L-glutamate + L-methionine. It functions in the pathway amino-acid biosynthesis; L-methionine biosynthesis via de novo pathway; L-methionine from L-homocysteine (MetE route): step 1/1. In terms of biological role, catalyzes the transfer of a methyl group from 5-methyltetrahydrofolate to homocysteine resulting in methionine formation. The chain is 5-methyltetrahydropteroyltriglutamate--homocysteine methyltransferase from Buchnera aphidicola subsp. Acyrthosiphon pisum (strain APS) (Acyrthosiphon pisum symbiotic bacterium).